Here is a 377-residue protein sequence, read N- to C-terminus: UDP-N,N'-diacetylbacillosamine 2-epimerase (hydrolyzing) (377 aa).

Belongs to the UDP-N-acetylglucosamine 2-epimerase family.

The enzyme catalyses UDP-N,N'-diacetylbacillosamine + H2O = 2,4-diacetamido-2,4,6-trideoxy-alpha-D-mannopyranose + UDP + H(+). Involved in biosynthesis of legionaminic acid (5,7-diamino-3,5,7,9-tetradeoxy-D-glycero-D-galacto-non-2-ulosonic acid)(Leg), a sialic acid-like derivative that is incorporated into virulence-associated cell surface glycoconjugates such as lipopolysaccharide (LPS) which could be a key determinant in the ability of L.pneumophila to inhibit the fusion of phagosomes with lysosomes. LPS contains a majority alpha2,4-linked homomer of legionaminic acid. Catalyzes the conversion of UDP-N,N'-diacetylbacillosamine (Bac2Ac4Ac) into 2,4-diacetamido-2,4,6-trideoxymannose and UDP. The polypeptide is UDP-N,N'-diacetylbacillosamine 2-epimerase (hydrolyzing) (Legionella pneumophila subsp. pneumophila (strain Philadelphia 1 / ATCC 33152 / DSM 7513)).